We begin with the raw amino-acid sequence, 371 residues long: Cytokine receptor-like factor 2 (371 aa).

A signal peptide spans 1–22 (MGRLVLLWGAAVFLLGGWMALG). The Extracellular portion of the chain corresponds to 23-231 (QGGAAEGVQI…PTPPKPKLSK (209 aa)). N-linked (GlcNAc...) asparagine glycosylation is found at asparagine 47 and asparagine 55. A disulfide bridge connects residues cysteine 71 and cysteine 84. Asparagine 101 and asparagine 169 each carry an N-linked (GlcNAc...) asparagine glycan. The Fibronectin type-III domain occupies 118 to 211 (KPSSPKHVRF…DWSEVTCWQR (94 aa)). Cysteine 180 and cysteine 218 are disulfide-bonded. The WSXWS motif motif lies at 200-204 (PSDWS). A helical transmembrane segment spans residues 232–252 (FILISSLAILLMVSLLLLSLW). At 253–371 (KLWRVKKFLI…VMNDRSYVAL (119 aa)) the chain is on the cytoplasmic side. Residues 261 to 269 (LIPSVPDPK) carry the Box 1 motif motif. Basic and acidic residues predominate over residues 322-336 (ESPRMLDPQTEEKEA). A disordered region spans residues 322-347 (ESPRMLDPQTEEKEASGGSLQLPHQP).

The protein belongs to the type I cytokine receptor family. Type 5 subfamily. As to quaternary structure, heterodimer of CRLF2 and IL7R. Expressed in heart, skeletal muscle, kidney and adult and fetal liver. Primarily expressed in dendrites and monocytes. Weakly expressed in T-cells.

It localises to the cell membrane. Its subcellular location is the secreted. Functionally, receptor for thymic stromal lymphopoietin (TSLP). Forms a functional complex with TSLP and IL7R which is capable of stimulating cell proliferation through activation of STAT3 and STAT5. Also activates JAK2. Implicated in the development of the hematopoietic system. The sequence is that of Cytokine receptor-like factor 2 (CRLF2) from Homo sapiens (Human).